The chain runs to 88 residues: UPF0297 protein STER_1937 (88 aa).

The protein belongs to the UPF0297 family.

The chain is UPF0297 protein STER_1937 from Streptococcus thermophilus (strain ATCC BAA-491 / LMD-9).